A 338-amino-acid chain; its full sequence is 1-aminocyclopropane-1-carboxylate deaminase (338 aa).

Lys51 carries the post-translational modification N6-(pyridoxal phosphate)lysine. The Nucleophile role is filled by Ser78.

Belongs to the ACC deaminase/D-cysteine desulfhydrase family. Homotrimer. Requires pyridoxal 5'-phosphate as cofactor.

The catalysed reaction is 1-aminocyclopropane-1-carboxylate + H2O = 2-oxobutanoate + NH4(+). Functionally, catalyzes a cyclopropane ring-opening reaction, the irreversible conversion of 1-aminocyclopropane-1-carboxylate (ACC) to ammonia and alpha-ketobutyrate. Allows growth on ACC as a nitrogen source. In Paraburkholderia xenovorans (strain LB400), this protein is 1-aminocyclopropane-1-carboxylate deaminase.